Reading from the N-terminus, the 208-residue chain is Small ribosomal subunit protein uS4 (208 aa).

The S4 RNA-binding domain maps to 96–159; the sequence is SRLDNIVYRL…KKNEKVLEAL (64 aa).

It belongs to the universal ribosomal protein uS4 family. In terms of assembly, part of the 30S ribosomal subunit. Contacts protein S5. The interaction surface between S4 and S5 is involved in control of translational fidelity.

Functionally, one of the primary rRNA binding proteins, it binds directly to 16S rRNA where it nucleates assembly of the body of the 30S subunit. In terms of biological role, with S5 and S12 plays an important role in translational accuracy. The polypeptide is Small ribosomal subunit protein uS4 (Mycoplasma capricolum subsp. capricolum (strain California kid / ATCC 27343 / NCTC 10154)).